The sequence spans 246 residues: Probable transcriptional regulatory protein CLL_A1008 (246 aa).

It belongs to the TACO1 family.

The protein resides in the cytoplasm. The chain is Probable transcriptional regulatory protein CLL_A1008 from Clostridium botulinum (strain Eklund 17B / Type B).